A 555-amino-acid polypeptide reads, in one-letter code: Probable ferredoxin/ferredoxin--NADP reductase (555 aa).

4Fe-4S ferredoxin-type domains are found at residues 2–29 and 37–66; these read PYII…PTPD and EMLY…SDTR. Positions 9, 15, 19, 46, 49, 52, and 56 each coordinate [4Fe-4S] cluster. The segment at 115–555 is ferredoxin--NADP reductase; it reads VAIVGSGPAA…APPLRLRALS (441 aa). The FAD site is built by Ala-123, Glu-143, Leu-151, and Ile-187. NADP(+)-binding positions include Arg-213, 258–261, 302–303, and Glu-314; these read NGNV and RR. FAD-binding positions include Trp-453 and 460 to 462; that span reads GFI. Gly-460 provides a ligand contact to NADP(+).

This sequence in the C-terminal section; belongs to the ferredoxin--NADP reductase family. Requires [4Fe-4S] cluster as cofactor. The cofactor is FAD.

It carries out the reaction 2 reduced [2Fe-2S]-[ferredoxin] + NADP(+) + H(+) = 2 oxidized [2Fe-2S]-[ferredoxin] + NADPH. This chain is Probable ferredoxin/ferredoxin--NADP reductase (fprB), found in Mycobacterium leprae (strain TN).